We begin with the raw amino-acid sequence, 96 residues long: NADH-ubiquinone oxidoreductase chain 4L (96 aa).

The next 3 helical transmembrane spans lie at 2–22 (IMIL…FCFV), 28–48 (LLSM…MLFI), and 62–82 (MFLT…VSMI).

Belongs to the complex I subunit 4L family.

The protein resides in the mitochondrion membrane. The catalysed reaction is a ubiquinone + NADH + 5 H(+)(in) = a ubiquinol + NAD(+) + 4 H(+)(out). Core subunit of the mitochondrial membrane respiratory chain NADH dehydrogenase (Complex I) that is believed to belong to the minimal assembly required for catalysis. Complex I functions in the transfer of electrons from NADH to the respiratory chain. The immediate electron acceptor for the enzyme is believed to be ubiquinone. This chain is NADH-ubiquinone oxidoreductase chain 4L (mt:ND4L), found in Drosophila melanogaster (Fruit fly).